The primary structure comprises 469 residues: Ribulose bisphosphate carboxylase large chain (469 aa).

Lys-5 carries the post-translational modification N6,N6,N6-trimethyllysine. The substrate site is built by Asn-114 and Thr-164. Lys-166 acts as the Proton acceptor in catalysis. Lys-168 provides a ligand contact to substrate. Mg(2+) contacts are provided by Lys-192, Asp-194, and Glu-195. Lys-192 is subject to N6-carboxylysine. Residue His-285 is the Proton acceptor of the active site. Substrate is bound by residues Arg-286, His-318, and Ser-370.

The protein belongs to the RuBisCO large chain family. Type I subfamily. In terms of assembly, heterohexadecamer of 8 large chains and 8 small chains; disulfide-linked. The disulfide link is formed within the large subunit homodimers. Mg(2+) serves as cofactor. Post-translationally, the disulfide bond which can form in the large chain dimeric partners within the hexadecamer appears to be associated with oxidative stress and protein turnover.

It is found in the plastid. It localises to the chloroplast. The enzyme catalyses 2 (2R)-3-phosphoglycerate + 2 H(+) = D-ribulose 1,5-bisphosphate + CO2 + H2O. It carries out the reaction D-ribulose 1,5-bisphosphate + O2 = 2-phosphoglycolate + (2R)-3-phosphoglycerate + 2 H(+). In terms of biological role, ruBisCO catalyzes two reactions: the carboxylation of D-ribulose 1,5-bisphosphate, the primary event in carbon dioxide fixation, as well as the oxidative fragmentation of the pentose substrate in the photorespiration process. Both reactions occur simultaneously and in competition at the same active site. The protein is Ribulose bisphosphate carboxylase large chain of Nicandra physalodes (Apple-of-Peru).